The following is a 165-amino-acid chain: Lipoprotein signal peptidase (165 aa).

A run of 3 helical transmembrane segments spans residues 9–29 (FLAI…VLLY), 69–89 (KYFL…FLFL), and 98–118 (IRFS…DIVF). Residues D124 and D142 contribute to the active site. Residues 133–153 (WFFPTFNFADIFISLGTLIFI) form a helical membrane-spanning segment.

This sequence belongs to the peptidase A8 family.

It is found in the cell inner membrane. The catalysed reaction is Release of signal peptides from bacterial membrane prolipoproteins. Hydrolyzes -Xaa-Yaa-Zaa-|-(S,diacylglyceryl)Cys-, in which Xaa is hydrophobic (preferably Leu), and Yaa (Ala or Ser) and Zaa (Gly or Ala) have small, neutral side chains.. It functions in the pathway protein modification; lipoprotein biosynthesis (signal peptide cleavage). In terms of biological role, this protein specifically catalyzes the removal of signal peptides from prolipoproteins. The sequence is that of Lipoprotein signal peptidase from Chlamydia abortus (strain DSM 27085 / S26/3) (Chlamydophila abortus).